We begin with the raw amino-acid sequence, 306 residues long: UDP-N-acetylenolpyruvoylglucosamine reductase (306 aa).

An FAD-binding PCMH-type domain is found at 28-193 (KVGGPADFLA…VSAKFSLKPG (166 aa)). Arg172 is an active-site residue. Ser222 (proton donor) is an active-site residue. Glu292 is an active-site residue.

The protein belongs to the MurB family. FAD serves as cofactor.

The protein localises to the cytoplasm. The enzyme catalyses UDP-N-acetyl-alpha-D-muramate + NADP(+) = UDP-N-acetyl-3-O-(1-carboxyvinyl)-alpha-D-glucosamine + NADPH + H(+). The protein operates within cell wall biogenesis; peptidoglycan biosynthesis. In terms of biological role, cell wall formation. The protein is UDP-N-acetylenolpyruvoylglucosamine reductase of Streptococcus mutans serotype c (strain ATCC 700610 / UA159).